Here is a 662-residue protein sequence, read N- to C-terminus: Acetyl-coenzyme A synthetase (662 aa).

Residues 197-200 and T317 contribute to the CoA site; that span reads RKGK. Residues 393-395, 417-422, D510, and R525 contribute to the ATP site; these read GEP and DTWWQT. S533 contributes to the CoA binding site. Residue R536 participates in ATP binding. Positions 549 and 552 each coordinate Mg(2+). K623 is subject to N6-acetyllysine.

The protein belongs to the ATP-dependent AMP-binding enzyme family. The cofactor is Mg(2+). In terms of processing, acetylated. Deacetylation by the SIR2-homolog deacetylase activates the enzyme.

The catalysed reaction is acetate + ATP + CoA = acetyl-CoA + AMP + diphosphate. In terms of biological role, catalyzes the conversion of acetate into acetyl-CoA (AcCoA), an essential intermediate at the junction of anabolic and catabolic pathways. AcsA undergoes a two-step reaction. In the first half reaction, AcsA combines acetate with ATP to form acetyl-adenylate (AcAMP) intermediate. In the second half reaction, it can then transfer the acetyl group from AcAMP to the sulfhydryl group of CoA, forming the product AcCoA. The polypeptide is Acetyl-coenzyme A synthetase (Helicobacter pylori (strain P12)).